The sequence spans 231 residues: Claudin-10 (231 aa).

The helical transmembrane segment at 1 to 21 threads the bilayer; the sequence is MASTASEIIAFMVSISGWVLV. Residues 22–80 lie on the Extracellular side of the membrane; it reads SSTLPTDYWKVSTIDGTVITTATYWANLWKTCVTDSTGVSNCKDFPSMLALDGYIQACR. A helical transmembrane segment spans residues 81–101; it reads GLMIAAVSLGFFGSIFALIGM. The Cytoplasmic segment spans residues 102 to 115; sequence KCTKVGGSDKAKAK. A helical membrane pass occupies residues 116–136; that stretch reads IACLAGIVFILSGLCSMTGCS. Over 137 to 160 the chain is Extracellular; sequence LYANKITTEFFDPLFVEQKYELGA. Residues 161–181 form a helical membrane-spanning segment; the sequence is ALFIGWAGASLCLIGGVIFCF. The Cytoplasmic portion of the chain corresponds to 182–231; the sequence is SISDNNKAPRMGYTYNGATSVMSSRTKYHGREGDLKTPNPSKQFDKNAYV.

This sequence belongs to the claudin family. As to quaternary structure, can form homodimers both in trans (interaction between CLDN10 molecules in opposing membranes) and in cis (interaction between CLDN10 molecules within one membrane). Interacts with CLDN19.

Its subcellular location is the cell junction. The protein resides in the tight junction. It is found in the cell membrane. The catalysed reaction is Na(+)(in) = Na(+)(out). It carries out the reaction Li(+)(in) = Li(+)(out). The enzyme catalyses K(+)(in) = K(+)(out). It catalyses the reaction Rb(+)(in) = Rb(+)(out). The catalysed reaction is Cs(+)(in) = Cs(+)(out). It carries out the reaction NH4(+)(in) = NH4(+)(out). The enzyme catalyses methylamine(out) = methylamine(in). It catalyses the reaction Mg(2+)(in) = Mg(2+)(out). The catalysed reaction is Ca(2+)(in) = Ca(2+)(out). It carries out the reaction Sr(2+)(in) = Sr(2+)(out). The enzyme catalyses chloride(in) = chloride(out). It catalyses the reaction nitrate(in) = nitrate(out). Its function is as follows. Forms paracellular channels: polymerizes in tight junction strands with cation- and anion-selective channels through the strands, conveying epithelial permeability in a process known as paracellular tight junction permeability. In sweat glands and in the thick ascending limb (TAL) of Henle's loop in kidney, it controls paracellular sodium permeability which is essential for proper sweat production and renal function. In renal proximal tubules, it conveys selective chloride over hydrogencarbonate anion permeability which is required for renal chloride reabsorption and salt homeostasis. This Bos taurus (Bovine) protein is Claudin-10 (CLDN10).